A 152-amino-acid chain; its full sequence is Small ribosomal subunit protein uS13z/uS13y/uS13x (152 aa).

Position 2 is an N-acetylserine (Ser-2).

The protein belongs to the universal ribosomal protein uS13 family.

Its subcellular location is the cytoplasm. In terms of biological role, located at the top of the head of the 40S subunit, it contacts several helices of the 18S rRNA. The polypeptide is Small ribosomal subunit protein uS13z/uS13y/uS13x (RPS18A) (Arabidopsis thaliana (Mouse-ear cress)).